Here is a 996-residue protein sequence, read N- to C-terminus: Disease resistance protein RGA4 (996 aa).

The interval 1 to 176 (MEAALLSGFI…PRIHEADLVG (176 aa)) is structured coiled coil (CC) domain. Residues 111–138 (NLQLAQQLQRLKRMAAEANQRKQRYTAA) adopt a coiled-coil conformation. An NB-ARC domain is found at 180–462 (DREELLEQLA…RWLAEGFVEP (283 aa)). 11 LRR repeats span residues 481–503 (RNII…TYGM), 504–528 (MREF…KFVP), 529–549 (KYVR…NFNG), 577–599 (LRVL…ICNL), 600–621 (VLLK…IAKL), 622–644 (KDLE…VFGL), 698–722 (MNKL…DLRE), 759–781 (PCYL…VTSL), 782–804 (RGLK…ALSN), 805–830 (LSYL…GFPR), and 851–874 (LPFL…QIEC).

Belongs to the disease resistance NB-LRR family. As to quaternary structure, forms homodimer or heterodimer with RGA5 through its coiled coil (CC) domain. Expressed in leaves.

Its subcellular location is the cytoplasm. Disease resistance (R) protein. Resistance proteins guard the plant against pathogens that contain an appropriate avirulence protein via an indirect interaction with this avirulence protein. That triggers a defense system including the hypersensitive response, which restricts the pathogen growth. Contribution of RGA5 is required to recognize the effector avirulence proteins AVR-Pia and AVR1-CO39 from M.oryzae. Acts as a constitutively active cell death inducer that is repressed by RGA5. Immune response triggered by the RGA4-RGA5 -mediated recognition of AVR1-CO39 confers resistance to X.oryzae pathovars. The protein is Disease resistance protein RGA4 of Oryza sativa subsp. japonica (Rice).